Here is a 548-residue protein sequence, read N- to C-terminus: Synaptic vesicle 2-related protein (548 aa).

Topologically, residues methionine 1–serine 87 are cytoplasmic. Residues serine 25 and serine 31 each carry the phosphoserine modification. Residues valine 88–alanine 108 form a helical membrane-spanning segment. Topologically, residues proline 109–valine 122 are vesicular. The chain crosses the membrane as a helical span at residues alanine 123–isoleucine 143. Residues serine 144–serine 156 lie on the Cytoplasmic side of the membrane. The chain crosses the membrane as a helical span at residues valine 157–leucine 177. Residues valine 178–arginine 180 lie on the Vesicular side of the membrane. A helical membrane pass occupies residues glycine 181–leucine 201. At proline 202–cysteine 209 the chain is on the cytoplasmic side. The chain crosses the membrane as a helical span at residues isoleucine 210–phenylalanine 230. The Vesicular segment spans residues valine 231–arginine 238. Residues tryptophan 239–proline 259 traverse the membrane as a helical segment. Residues glutamate 260–threonine 316 are Cytoplasmic-facing. The helical transmembrane segment at threonine 317–leucine 337 threads the bilayer. Residues threonine 338–tyrosine 373 are Vesicular-facing. The helical transmembrane segment at methionine 374 to isoleucine 394 threads the bilayer. The Cytoplasmic segment spans residues aspartate 395–lysine 401. The chain crosses the membrane as a helical span at residues threonine 402–glycine 422. Residues arginine 423 to asparagine 424 lie on the Vesicular side of the membrane. Residues valine 425–tyrosine 445 form a helical membrane-spanning segment. Residues valine 446 to arginine 457 are Cytoplasmic-facing. Residues alanine 458–isoleucine 478 form a helical membrane-spanning segment. At alanine 479–leucine 489 the chain is on the vesicular side. A helical membrane pass occupies residues threonine 490 to isoleucine 510. At glutamate 511 to glutamate 548 the chain is on the cytoplasmic side. The residue at position 542 (serine 542) is a Phosphoserine.

The protein belongs to the major facilitator superfamily.

It localises to the cytoplasmic vesicle. The protein resides in the secretory vesicle. Its subcellular location is the synaptic vesicle membrane. This chain is Synaptic vesicle 2-related protein (SVOP), found in Pongo abelii (Sumatran orangutan).